Here is a 440-residue protein sequence, read N- to C-terminus: Xylose isomerase (440 aa).

Catalysis depends on residues His100 and Asp103. Mg(2+) contacts are provided by Glu231, Glu267, His270, Asp295, Asp306, Asp308, and Asp338.

This sequence belongs to the xylose isomerase family. As to quaternary structure, homotetramer. Mg(2+) serves as cofactor.

It is found in the cytoplasm. It carries out the reaction alpha-D-xylose = alpha-D-xylulofuranose. The sequence is that of Xylose isomerase from Burkholderia thailandensis (strain ATCC 700388 / DSM 13276 / CCUG 48851 / CIP 106301 / E264).